The chain runs to 348 residues: Phenylalanine--tRNA ligase alpha subunit (348 aa).

Glu-259 contacts Mg(2+).

It belongs to the class-II aminoacyl-tRNA synthetase family. Phe-tRNA synthetase alpha subunit type 1 subfamily. As to quaternary structure, tetramer of two alpha and two beta subunits. The cofactor is Mg(2+).

It localises to the cytoplasm. It carries out the reaction tRNA(Phe) + L-phenylalanine + ATP = L-phenylalanyl-tRNA(Phe) + AMP + diphosphate + H(+). This chain is Phenylalanine--tRNA ligase alpha subunit, found in Enterococcus faecalis (strain ATCC 700802 / V583).